The chain runs to 80 residues: Exodeoxyribonuclease 7 small subunit (80 aa).

This sequence belongs to the XseB family. As to quaternary structure, heterooligomer composed of large and small subunits.

It is found in the cytoplasm. The catalysed reaction is Exonucleolytic cleavage in either 5'- to 3'- or 3'- to 5'-direction to yield nucleoside 5'-phosphates.. Its function is as follows. Bidirectionally degrades single-stranded DNA into large acid-insoluble oligonucleotides, which are then degraded further into small acid-soluble oligonucleotides. The polypeptide is Exodeoxyribonuclease 7 small subunit (Salmonella paratyphi B (strain ATCC BAA-1250 / SPB7)).